Here is a 21-residue protein sequence, read N- to C-terminus: Hemocyanin subunit 1 (21 aa).

This sequence belongs to the tyrosinase family. Hemocyanin subfamily. Hemolymph.

The protein localises to the secreted. Its subcellular location is the extracellular space. In terms of biological role, hemocyanins are copper-containing oxygen carriers occurring freely dissolved in the hemolymph of many mollusks and arthropods. The protein is Hemocyanin subunit 1 of Maja squinado (Mediterranean spider crab).